Reading from the N-terminus, the 517-residue chain is Crotonobetaine/carnitine--CoA ligase (517 aa).

The protein belongs to the ATP-dependent AMP-binding enzyme family.

It carries out the reaction 4-(trimethylamino)butanoate + ATP + CoA = 4-(trimethylamino)butanoyl-CoA + AMP + diphosphate. It catalyses the reaction crotonobetaine + ATP + CoA = crotonobetainyl-CoA + AMP + diphosphate. The catalysed reaction is (R)-carnitine + ATP + CoA = (R)-carnitinyl-CoA + AMP + diphosphate. Its pathway is amine and polyamine metabolism; carnitine metabolism. Catalyzes the transfer of CoA to carnitine, generating the initial carnitinyl-CoA needed for the CaiB reaction cycle. Also has activity toward crotonobetaine and gamma-butyrobetaine. In Salmonella agona (strain SL483), this protein is Crotonobetaine/carnitine--CoA ligase.